Reading from the N-terminus, the 328-residue chain is Flagellar motor switch protein FliM (328 aa).

An interaction with unphosphorylated CheY region spans residues 1-45 (MSDVLSQEEINQLIEALMKGELKEEDLLKEEEEKKVKPYDFKRPS).

This sequence belongs to the FliM family. Interacts (via N-terminus) with unphosphorylated CheY. Interacts (via central domain) with FliG (via central domain or via central domain and C-terminus).

It localises to the cell inner membrane. The protein localises to the bacterial flagellum basal body. In terms of biological role, fliM is one of three proteins (FliG, FliN, FliM) that forms the rotor-mounted switch complex (C ring), located at the base of the basal body. This complex interacts with the CheY and CheX chemotaxis proteins, in addition to contacting components of the motor that determine the direction of flagellar rotation. This Thermotoga maritima (strain ATCC 43589 / DSM 3109 / JCM 10099 / NBRC 100826 / MSB8) protein is Flagellar motor switch protein FliM.